A 1568-amino-acid polypeptide reads, in one-letter code: Kielin/chordin-like protein (1568 aa).

The signal sequence occupies residues M1 to G23. The tract at residues G27–S49 is disordered. A compositionally biased stretch (polar residues) spans G35–S49. The stretch at L60–C87 forms a coiled coil. 16 consecutive VWFC domains span residues R136–R193, P194–Q253, Q253–D312, D312–D370, P426–D485, D485–P544, P544–S602, S602–P661, A667–D725, D725–D782, D782–Q841, H900–R959, R959–S1017, S1017–A1085, P1082–R1145, and Q1149–L1209. N-linked (GlcNAc...) asparagine glycosylation occurs at N340. N-linked (GlcNAc...) asparagine glycosylation is present at N499. N1090 is a glycosylation site (N-linked (GlcNAc...) asparagine). Residues A1213–S1389 form the VWFD domain. Disulfide bonds link C1215–C1347 and C1237–C1388. Residues C1483–C1543 enclose the TIL domain.

As to quaternary structure, interacts with BMP7 and, by doing so, enhances binding to the type I receptors that contains cytoplasmic serine/threonine protein kinase domains. Also able to interact with activin-A and TGFB1.

Its subcellular location is the secreted. Enhances bone morphogenetic protein (BMP) signaling in a paracrine manner. In contrast, it inhibits both the activin-A and TGFB1-mediated signaling pathways. The polypeptide is Kielin/chordin-like protein (Homo sapiens (Human)).